Here is a 319-residue protein sequence, read N- to C-terminus: Ankyrin repeat domain-containing protein 1 (319 aa).

Positions 46-65 (KTLPANSVKQGEEQRKSEKL) are disordered. Residues 53-89 (VKQGEEQRKSEKLREAELKKKKLEQRSKLENLEDLEI) are a coiled coil. Positions 55-65 (QGEEQRKSEKL) are enriched in basic and acidic residues. ANK repeat units follow at residues 152–181 (YKRTALHRACLEGHLAIVEKLMEAGAQIEF), 185–214 (LESTAIHWACRGGNADVLKLLLNKGAKISA), 218–247 (LLSTALHVAVRTGHYECAEHLIACEADLNA), 251–280 (EGDTPLHDAVRLNRYKMIRLLMTFGADLKV), and 284–315 (AGKTPMDLVLHWQSGTKAIFDSLKENAYKNSR).

In terms of assembly, interacts with TTN/titin and YBX1. As to expression, expressed in heart, cardiac muscle.

The protein resides in the nucleus. May play an important role in endothelial cell activation. May act as a nuclear transcription factor that negatively regulates the expression of cardiac genes. The protein is Ankyrin repeat domain-containing protein 1 (Ankrd1) of Mus musculus (Mouse).